The primary structure comprises 168 residues: MSMNLLPWRTYQHQKRLRRLAFYIALFILLAINLMLAFSNLIEQQKQNLQAQQKSFEQLNQQLHKTTMQIDQLRIAVKVGEVLTSIPNEQVKKSLQQLSELPFQQGELNKFKQDANNLSLEGNAQDQTEFELIHQFLKKHFPNVKLSQVQPEQDTLFFHFDVEQGAEK.

Functionally, involved in transformation (genetic competence for DNA uptake). This chain is Competence protein B (comB), found in Haemophilus influenzae (strain ATCC 51907 / DSM 11121 / KW20 / Rd).